Consider the following 278-residue polypeptide: Energy-coupling factor transporter ATP-binding protein EcfA1 (278 aa).

In terms of domain architecture, ABC transporter spans 5–240 (IEVRNLKYKY…EDLEELGLDQ (236 aa)). 40–47 (GHNGSGKS) lines the ATP pocket.

The protein belongs to the ABC transporter superfamily. Energy-coupling factor EcfA family. Forms a stable energy-coupling factor (ECF) transporter complex composed of 2 membrane-embedded substrate-binding proteins (S component), 2 ATP-binding proteins (A component) and 2 transmembrane proteins (T component).

Its subcellular location is the cell membrane. ATP-binding (A) component of a common energy-coupling factor (ECF) ABC-transporter complex. Unlike classic ABC transporters this ECF transporter provides the energy necessary to transport a number of different substrates. This is Energy-coupling factor transporter ATP-binding protein EcfA1 from Streptococcus sanguinis (strain SK36).